Consider the following 1071-residue polypeptide: ATP-dependent helicase/deoxyribonuclease subunit B (1071 aa).

This sequence belongs to the helicase family. AddB/RexB type 2 subfamily. Heterodimer of AddA and RexB. Requires Mg(2+) as cofactor.

Its function is as follows. The heterodimer acts as both an ATP-dependent DNA helicase and an ATP-dependent, dual-direction single-stranded exonuclease. Recognizes the chi site generating a DNA molecule suitable for the initiation of homologous recombination. This subunit has 5' -&gt; 3' nuclease activity but not helicase activity. The polypeptide is ATP-dependent helicase/deoxyribonuclease subunit B (Streptococcus pyogenes serotype M1).